We begin with the raw amino-acid sequence, 380 residues long: Erythronate-4-phosphate dehydrogenase (380 aa).

Residues S45 and T66 each coordinate substrate. Residues 126-127, D146, T174, 205-207, and D231 contribute to the NAD(+) site; these read QV and ASR. Residue R207 is part of the active site. E236 is an active-site residue. The Proton donor role is filled by H253. NAD(+) is bound at residue G256. Y257 serves as a coordination point for substrate.

The protein belongs to the D-isomer specific 2-hydroxyacid dehydrogenase family. PdxB subfamily. As to quaternary structure, homodimer.

It is found in the cytoplasm. The enzyme catalyses 4-phospho-D-erythronate + NAD(+) = (R)-3-hydroxy-2-oxo-4-phosphooxybutanoate + NADH + H(+). Its pathway is cofactor biosynthesis; pyridoxine 5'-phosphate biosynthesis; pyridoxine 5'-phosphate from D-erythrose 4-phosphate: step 2/5. Functionally, catalyzes the oxidation of erythronate-4-phosphate to 3-hydroxy-2-oxo-4-phosphonooxybutanoate. This chain is Erythronate-4-phosphate dehydrogenase, found in Pseudomonas syringae pv. syringae (strain B728a).